The following is a 198-amino-acid chain: Recombination protein RecR (198 aa).

Residues 58 to 73 (CSICGNYTDSDPCAIC) form a C4-type zinc finger. One can recognise a Toprim domain in the interval 81–175 (SIICVIEQPK…KVTRIAHGVP (95 aa)).

It belongs to the RecR family.

Functionally, may play a role in DNA repair. It seems to be involved in an RecBC-independent recombinational process of DNA repair. It may act with RecF and RecO. The polypeptide is Recombination protein RecR (Clostridium novyi (strain NT)).